The sequence spans 245 residues: Isopentenyl phosphate kinase (245 aa).

5 to 9 (KIGGS) is a binding site for ATP. Gly-45 contacts substrate. Position 46 (Gly-46) interacts with ATP. Residues His-50 and Gly-143 each coordinate substrate. Residues Asp-164, 169–174 (YSKDPK), Gly-201, and Lys-205 contribute to the ATP site.

The protein belongs to the isopentenyl phosphate kinase family. In terms of assembly, homodimer.

It carries out the reaction isopentenyl phosphate + ATP = isopentenyl diphosphate + ADP. Its function is as follows. Catalyzes the formation of isopentenyl diphosphate (IPP), the building block of all isoprenoids. Has lower activity with isopentenyl thiolophosphate (ISP). Has low activity with dimethylallyl phosphate (DMAP), 1-butyl phosphate (BP) and 3-buten-1-yl phosphate (BEP). Has no significant activity with geranyl phosphate (in vitro). This is Isopentenyl phosphate kinase from Thermoplasma acidophilum (strain ATCC 25905 / DSM 1728 / JCM 9062 / NBRC 15155 / AMRC-C165).